The following is a 71-amino-acid chain: Large ribosomal subunit protein bL31 (71 aa).

Zn(2+)-binding residues include Cys-16, Cys-18, Cys-37, and Cys-40.

It belongs to the bacterial ribosomal protein bL31 family. Type A subfamily. Part of the 50S ribosomal subunit. The cofactor is Zn(2+).

Functionally, binds the 23S rRNA. The protein is Large ribosomal subunit protein bL31 of Wigglesworthia glossinidia brevipalpis.